The chain runs to 314 residues: Ketimine reductase mu-crystallin (314 aa).

R47 contacts 3,3',5-triiodo-L-thyronine. Residues S91, H92, R119, A144, V146, Q147, N168, R169, T170, N173, T205, and M206 each coordinate NADPH. Position 257 (E257) interacts with 3,3',5-triiodo-L-thyronine. S292 serves as a coordination point for NADPH.

The protein belongs to the ornithine cyclodeaminase/mu-crystallin family. As to quaternary structure, homodimer. Binds the thyroid hormone triiodothyronine (T3); T3 binding inhibits enzymatic activity.

It localises to the cytoplasm. The catalysed reaction is L-pipecolate + NAD(+) = Delta(1)-piperideine-2-carboxylate + NADH + H(+). It carries out the reaction L-pipecolate + NADP(+) = Delta(1)-piperideine-2-carboxylate + NADPH + H(+). It catalyses the reaction L-proline + NADP(+) = 1-pyrroline-2-carboxylate + NADPH + H(+). The enzyme catalyses L-proline + NAD(+) = 1-pyrroline-2-carboxylate + NADH + H(+). The catalysed reaction is (3R)-1,4-thiomorpholine-3-carboxylate + NAD(+) = 3,4-dehydrothiomorpholine-3-carboxylate + NADH + 2 H(+). It carries out the reaction (3R)-1,4-thiomorpholine-3-carboxylate + NADP(+) = 3,4-dehydrothiomorpholine-3-carboxylate + NADPH + 2 H(+). It catalyses the reaction (S)-cystathionine ketimine + NADH + 2 H(+) = (3R,5S)-2,3,5,6,7-pentahydro-1,4-thiazepine-3,5-dicarboxylate + NAD(+). The enzyme catalyses (S)-cystathionine ketimine + NADPH + 2 H(+) = (3R,5S)-2,3,5,6,7-pentahydro-1,4-thiazepine-3,5-dicarboxylate + NADP(+). The catalysed reaction is (R)-lanthionine ketimine + NADPH + 2 H(+) = (3R,5R)-1,4-thiomorpholine-3,5-dicarboxylate + NADP(+). It carries out the reaction Delta(2)-thiazoline-2-carboxylate + NADPH + 2 H(+) = L-thiazolidine-2-carboxylate + NADP(+). In terms of biological role, catalyzes the NAD(P)H-dependent reduction of imine double bonds of a number of cyclic ketimine substrates, including sulfur-containing cyclic ketimines. Under physiological conditions, it efficiently catalyzes delta(1)-piperideine-2-carboxylate (P2C) and delta(1)-pyrroline-2-carboxylate (Pyr2C) reduction, suggesting a central role in lysine and glutamate metabolism. Additional substrates are (S)-cystathionine ketimine (CysK), 3,4-dehydrothiomorpholine-3-carboxylate (AECK), and (R)-lanthionine ketimine (LK) that is reduced at very low rate compared to other substrates. Also catalyzes the NAD(P)H-dependent reduction of delta(2)-thiazoline-2-carboxylate (T2C). The polypeptide is Ketimine reductase mu-crystallin (CRYM) (Bos taurus (Bovine)).